A 306-amino-acid chain; its full sequence is Transcription initiation factor IIB (306 aa).

Repeat copies occupy residues 122–205 (NELE…LREL) and 216–297 (DYVT…ELTQ).

This sequence belongs to the TFIIB family.

Its function is as follows. Stabilizes TBP binding to an archaeal box-A promoter. Also responsible for recruiting RNA polymerase II to the pre-initiation complex (DNA-TBP-TFIIB). The sequence is that of Transcription initiation factor IIB from Saccharolobus shibatae (strain ATCC 51178 / DSM 5389 / JCM 8931 / NBRC 15437 / B12) (Sulfolobus shibatae).